The sequence spans 440 residues: 3-phosphoshikimate 1-carboxyvinyltransferase (440 aa).

K26, S27, and R31 together coordinate 3-phosphoshikimate. Phosphoenolpyruvate is bound at residue K26. Residues G99 and R127 each coordinate phosphoenolpyruvate. Residues S172, Q174, D320, and K347 each contribute to the 3-phosphoshikimate site. Q174 contacts phosphoenolpyruvate. The active-site Proton acceptor is the D320. 2 residues coordinate phosphoenolpyruvate: R351 and R392.

This sequence belongs to the EPSP synthase family. In terms of assembly, monomer.

It is found in the cytoplasm. The catalysed reaction is 3-phosphoshikimate + phosphoenolpyruvate = 5-O-(1-carboxyvinyl)-3-phosphoshikimate + phosphate. The protein operates within metabolic intermediate biosynthesis; chorismate biosynthesis; chorismate from D-erythrose 4-phosphate and phosphoenolpyruvate: step 6/7. Its function is as follows. Catalyzes the transfer of the enolpyruvyl moiety of phosphoenolpyruvate (PEP) to the 5-hydroxyl of shikimate-3-phosphate (S3P) to produce enolpyruvyl shikimate-3-phosphate and inorganic phosphate. The polypeptide is 3-phosphoshikimate 1-carboxyvinyltransferase (Xanthomonas euvesicatoria pv. vesicatoria (strain 85-10) (Xanthomonas campestris pv. vesicatoria)).